The primary structure comprises 360 residues: Phenylalanine--tRNA ligase alpha subunit (360 aa).

Residue glutamate 260 participates in Mg(2+) binding.

Belongs to the class-II aminoacyl-tRNA synthetase family. Phe-tRNA synthetase alpha subunit type 1 subfamily. In terms of assembly, tetramer of two alpha and two beta subunits. Requires Mg(2+) as cofactor.

The protein localises to the cytoplasm. The enzyme catalyses tRNA(Phe) + L-phenylalanine + ATP = L-phenylalanyl-tRNA(Phe) + AMP + diphosphate + H(+). The protein is Phenylalanine--tRNA ligase alpha subunit of Sinorhizobium fredii (strain NBRC 101917 / NGR234).